Consider the following 166-residue polypeptide: Putative membrane protein 164 (166 aa).

The Intravirion segment spans residues 1 to 4 (MYHP). The helical transmembrane segment at 5-25 (VVQVLIGLILVIILILGFYHL) threads the bilayer. Topologically, residues 26–166 (KKKSCKTDTD…TIMGIARNIL (141 aa)) are virion surface.

This sequence belongs to the asfivirus envelope protein p22 family.

Its subcellular location is the virion membrane. The protein localises to the host cell membrane. The polypeptide is Putative membrane protein 164 (Ornithodoros (relapsing fever ticks)).